The sequence spans 222 residues: Phosphoribosylformylglycinamidine synthase subunit PurQ (222 aa).

One can recognise a Glutamine amidotransferase type-1 domain in the interval 3 to 222 (AAVVVFPGSN…RALTGALAAV (220 aa)). The Nucleophile role is filled by cysteine 86. Catalysis depends on residues histidine 194 and glutamate 196.

As to quaternary structure, part of the FGAM synthase complex composed of 1 PurL, 1 PurQ and 2 PurS subunits.

It localises to the cytoplasm. The catalysed reaction is N(2)-formyl-N(1)-(5-phospho-beta-D-ribosyl)glycinamide + L-glutamine + ATP + H2O = 2-formamido-N(1)-(5-O-phospho-beta-D-ribosyl)acetamidine + L-glutamate + ADP + phosphate + H(+). It carries out the reaction L-glutamine + H2O = L-glutamate + NH4(+). It participates in purine metabolism; IMP biosynthesis via de novo pathway; 5-amino-1-(5-phospho-D-ribosyl)imidazole from N(2)-formyl-N(1)-(5-phospho-D-ribosyl)glycinamide: step 1/2. Functionally, part of the phosphoribosylformylglycinamidine synthase complex involved in the purines biosynthetic pathway. Catalyzes the ATP-dependent conversion of formylglycinamide ribonucleotide (FGAR) and glutamine to yield formylglycinamidine ribonucleotide (FGAM) and glutamate. The FGAM synthase complex is composed of three subunits. PurQ produces an ammonia molecule by converting glutamine to glutamate. PurL transfers the ammonia molecule to FGAR to form FGAM in an ATP-dependent manner. PurS interacts with PurQ and PurL and is thought to assist in the transfer of the ammonia molecule from PurQ to PurL. This chain is Phosphoribosylformylglycinamidine synthase subunit PurQ, found in Roseobacter denitrificans (strain ATCC 33942 / OCh 114) (Erythrobacter sp. (strain OCh 114)).